The sequence spans 426 residues: Dihydrofolate synthase/folylpolyglutamate synthase (426 aa).

58–61 (GKGS) contributes to the ATP binding site. Ser-82 contacts Mg(2+). 121-124 (TRFE) contacts 7,8-dihydropteroate. Glu-145 lines the Mg(2+) pocket. 152–154 (LDA) serves as a coordination point for 7,8-dihydropteroate. His-172 provides a ligand contact to Mg(2+). Positions 289 and 302 each coordinate ATP.

The protein belongs to the folylpolyglutamate synthase family. As to quaternary structure, monomer. The cofactor is Mg(2+).

It catalyses the reaction 7,8-dihydropteroate + L-glutamate + ATP = 7,8-dihydrofolate + ADP + phosphate + H(+). The catalysed reaction is (6S)-5,6,7,8-tetrahydrofolyl-(gamma-L-Glu)(n) + L-glutamate + ATP = (6S)-5,6,7,8-tetrahydrofolyl-(gamma-L-Glu)(n+1) + ADP + phosphate + H(+). The enzyme catalyses 10-formyltetrahydrofolyl-(gamma-L-Glu)(n) + L-glutamate + ATP = 10-formyltetrahydrofolyl-(gamma-L-Glu)(n+1) + ADP + phosphate + H(+). It carries out the reaction (6R)-5,10-methylenetetrahydrofolyl-(gamma-L-Glu)(n) + L-glutamate + ATP = (6R)-5,10-methylenetetrahydrofolyl-(gamma-L-Glu)(n+1) + ADP + phosphate + H(+). The protein operates within cofactor biosynthesis; tetrahydrofolate biosynthesis; 7,8-dihydrofolate from 2-amino-4-hydroxy-6-hydroxymethyl-7,8-dihydropteridine diphosphate and 4-aminobenzoate: step 2/2. Its pathway is cofactor biosynthesis; tetrahydrofolylpolyglutamate biosynthesis. Functionally, functions in two distinct reactions of the de novo folate biosynthetic pathway. Catalyzes the addition of a glutamate residue to dihydropteroate (7,8-dihydropteroate or H2Pte) to form dihydrofolate (7,8-dihydrofolate monoglutamate or H2Pte-Glu). Also catalyzes successive additions of L-glutamate to tetrahydrofolate or 10-formyltetrahydrofolate or 5,10-methylenetetrahydrofolate, leading to folylpolyglutamate derivatives. The polypeptide is Dihydrofolate synthase/folylpolyglutamate synthase (folC) (Buchnera aphidicola subsp. Baizongia pistaciae (strain Bp)).